We begin with the raw amino-acid sequence, 193 residues long: Probable DNA-directed RNA polymerase subunit delta (193 aa).

Residues 14–83 (LSMIEVARAI…GENKWGLRSW (70 aa)) enclose the HTH HARE-type domain. Acidic residues-rich tracts occupy residues 117-134 (GDDDAIDYGHDDPEDEDN) and 142-193 (EYDD…VVDE). Positions 117–193 (GDDDAIDYGH…EYSDEEVVDE (77 aa)) are disordered.

The protein belongs to the RpoE family. As to quaternary structure, RNAP is composed of a core of 2 alpha, a beta and a beta' subunits. The core is associated with a delta subunit and one of several sigma factors.

Functionally, participates in both the initiation and recycling phases of transcription. In the presence of the delta subunit, RNAP displays an increased specificity of transcription, a decreased affinity for nucleic acids, and an increased efficiency of RNA synthesis because of enhanced recycling. The sequence is that of Probable DNA-directed RNA polymerase subunit delta from Streptococcus suis (strain 05ZYH33).